We begin with the raw amino-acid sequence, 72 residues long: Large ribosomal subunit protein bL31 (72 aa).

C16, C18, C37, and C40 together coordinate Zn(2+).

The protein belongs to the bacterial ribosomal protein bL31 family. Type A subfamily. In terms of assembly, part of the 50S ribosomal subunit. The cofactor is Zn(2+).

Its function is as follows. Binds the 23S rRNA. The chain is Large ribosomal subunit protein bL31 from Hahella chejuensis (strain KCTC 2396).